Here is a 426-residue protein sequence, read N- to C-terminus: Serine/threonine-protein kinase ssn3 (426 aa).

One can recognise a Protein kinase domain in the interval 41–368; it reads YHIVGFISSG…AREALEHPYF (328 aa). ATP contacts are provided by residues 47 to 55 and Lys71; that span reads ISSGTYGRV. The active-site Proton acceptor is Asp173. The disordered stretch occupies residues 390–426; that stretch reads RVTQDDNDIRSGSLPGTKRSGLPDDSLMGRAAKRLKE.

It belongs to the protein kinase superfamily. CMGC Ser/Thr protein kinase family. CDC2/CDKX subfamily. Component of the srb8-11 complex, a regulatory module of the Mediator complex. Mg(2+) is required as a cofactor.

The protein localises to the nucleus. The enzyme catalyses L-seryl-[protein] + ATP = O-phospho-L-seryl-[protein] + ADP + H(+). It catalyses the reaction L-threonyl-[protein] + ATP = O-phospho-L-threonyl-[protein] + ADP + H(+). It carries out the reaction [DNA-directed RNA polymerase] + ATP = phospho-[DNA-directed RNA polymerase] + ADP + H(+). Component of the srb8-11 complex. The srb8-11 complex is a regulatory module of the Mediator complex which is itself dependent transcription. The srb8-11 complex may be involved in the transcriptional repression of a subset of genes regulated by Mediator. It may inhibit the association of the Mediator complex with RNA polymerase II to form the holoenzyme complex. The srb8-11 complex phosphorylates the C-terminal domain (CTD) of the largest subunit of RNA polymerase II. This chain is Serine/threonine-protein kinase ssn3 (ssn3), found in Neosartorya fischeri (strain ATCC 1020 / DSM 3700 / CBS 544.65 / FGSC A1164 / JCM 1740 / NRRL 181 / WB 181) (Aspergillus fischerianus).